Consider the following 143-residue polypeptide: Transcriptional regulator MraZ (143 aa).

SpoVT-AbrB domains follow at residues 5 to 47 and 76 to 119; these read EYRH…TQEE and ATEC…SEDR.

The protein belongs to the MraZ family. As to quaternary structure, forms oligomers.

It localises to the cytoplasm. The protein localises to the nucleoid. The chain is Transcriptional regulator MraZ from Ligilactobacillus salivarius (strain UCC118) (Lactobacillus salivarius).